Here is a 223-residue protein sequence, read N- to C-terminus: Translation initiation factor 6 (223 aa).

This sequence belongs to the eIF-6 family.

Its function is as follows. Binds to the 50S ribosomal subunit and prevents its association with the 30S ribosomal subunit to form the 70S initiation complex. The polypeptide is Translation initiation factor 6 (Thermofilum pendens (strain DSM 2475 / Hrk 5)).